Reading from the N-terminus, the 476-residue chain is Bifunctional protein HldE (476 aa).

A ribokinase region spans residues methionine 1–serine 318. Asparagine 195–glutamate 198 provides a ligand contact to ATP. Aspartate 264 is an active-site residue. The interval methionine 344 to glycine 476 is cytidylyltransferase.

It in the N-terminal section; belongs to the carbohydrate kinase PfkB family. The protein in the C-terminal section; belongs to the cytidylyltransferase family. As to quaternary structure, homodimer.

It catalyses the reaction D-glycero-beta-D-manno-heptose 7-phosphate + ATP = D-glycero-beta-D-manno-heptose 1,7-bisphosphate + ADP + H(+). It carries out the reaction D-glycero-beta-D-manno-heptose 1-phosphate + ATP + H(+) = ADP-D-glycero-beta-D-manno-heptose + diphosphate. It functions in the pathway nucleotide-sugar biosynthesis; ADP-L-glycero-beta-D-manno-heptose biosynthesis; ADP-L-glycero-beta-D-manno-heptose from D-glycero-beta-D-manno-heptose 7-phosphate: step 1/4. Its pathway is nucleotide-sugar biosynthesis; ADP-L-glycero-beta-D-manno-heptose biosynthesis; ADP-L-glycero-beta-D-manno-heptose from D-glycero-beta-D-manno-heptose 7-phosphate: step 3/4. In terms of biological role, catalyzes the phosphorylation of D-glycero-D-manno-heptose 7-phosphate at the C-1 position to selectively form D-glycero-beta-D-manno-heptose-1,7-bisphosphate. Its function is as follows. Catalyzes the ADP transfer from ATP to D-glycero-beta-D-manno-heptose 1-phosphate, yielding ADP-D-glycero-beta-D-manno-heptose. This Aliivibrio salmonicida (strain LFI1238) (Vibrio salmonicida (strain LFI1238)) protein is Bifunctional protein HldE.